The sequence spans 317 residues: Probable cell division protein WhiA (317 aa).

Residues 281 to 314 constitute a DNA-binding region (H-T-H motif); the sequence is TLKELGEMINPPIGKSGVNHRLRKLDQIADRERG.

Belongs to the WhiA family.

Functionally, involved in cell division and chromosome segregation. The protein is Probable cell division protein WhiA of Alkaliphilus metalliredigens (strain QYMF).